A 466-amino-acid polypeptide reads, in one-letter code: Glutamyl-tRNA reductase (466 aa).

Residues 47-50, Ser107, 112-114, and Gln118 contribute to the substrate site; these read TCNR and EQQ. The Nucleophile role is filled by Cys48. An NADP(+)-binding site is contributed by 194-199; that stretch reads GAGAMS.

The protein belongs to the glutamyl-tRNA reductase family. As to quaternary structure, homodimer.

It carries out the reaction (S)-4-amino-5-oxopentanoate + tRNA(Glu) + NADP(+) = L-glutamyl-tRNA(Glu) + NADPH + H(+). It functions in the pathway porphyrin-containing compound metabolism; protoporphyrin-IX biosynthesis; 5-aminolevulinate from L-glutamyl-tRNA(Glu): step 1/2. Catalyzes the NADPH-dependent reduction of glutamyl-tRNA(Glu) to glutamate 1-semialdehyde (GSA). This chain is Glutamyl-tRNA reductase, found in Corynebacterium efficiens (strain DSM 44549 / YS-314 / AJ 12310 / JCM 11189 / NBRC 100395).